A 1165-amino-acid polypeptide reads, in one-letter code: MAASSSSTGLPPQHQVFINFRGEDLRLGFVSHLVEALENDNIKVFIDNYADKGEPLETLLTKIHDSKIALAIFSGKYTESTWCLRELAMIKDCVEKGKLVAIPIFYKVDPSTVRGVRGQFGDAFRDLEERDVIKKKEWKQALKWIPGLIGITVHDKSPESEILNEIVKEVKKVLKKVSLEGSQKVVSVDPSQSIDTLSSVGGEKDKTFGIKQRLKELEEKLDLVKYKGTRVIGVVGMPGIGKTTLVKELYKTWQGKFSRYALIDQIRGKSNNFRLECLPTLLLEKLLPELNNPQLDSIEEPYKTHKGLLRERKVLVVLDDVSRREQIYALLGKYDLHSKHEWIKDGSRIIIATNDISSLKGLVHDTYVVRQLNHRDGLQLFRYHAFHYDQATPPKVDFMKLSDEFVHYARGHPLALKILGRELYEKNMKHWETKLIILAQSPTTYIGEVVQVSYDELSLAQKDAFLDIACFRSQDVDYVESLLVSSDPGSAEAIKALKNKFLIDTCDGRVEMHDLLYRFSRELDLKASTQGGSKQRRLWVRQDIINVQQKTMGAANVRGIFLDLSEVKVETSLDREHFKNMRNLRYLKLYNSHCPHECLTNNKINMPDGLELPLKEVRCLHWLKFPLEELPNDFDPINLVDLKLPYSEIERLWDGVKDTPVLKWVDLNHSSKLCSLSGLSKAQNLQRLNLEGCTSLESLRDVNLTSLKTLTLSNCSNFKEFPLIPENLKALYLDGTSISQLPDNVGNLKRLVLLNMKDCKVLETIPTCVSELKTLQKLVLSGCSKLKEFPEINKSSLKILLLDGTSIKTMPQLPSVQYLCLSRNDHLIYLPAGINQVSQLTRLDLKYCTKLTYVPELPPTLQYLDAHGCSSLKNVAKPLARIMSTVQNHYTFNFTNCGNLEQAAKEEITSYAQRKCQLLSDARKHYNEGSEALFSTCFPGCEVPSWFGHEAVGSLLQRKLLPHWHDKRLSGIALCAVVSFPDSQDQLSCFSVTCTFKIKAEDKSWVPFTCPVGIWTREGNKKDRIESDHVFIAYISSPHSIRCLEEKNSDKCNFSEASLEFTVTSDTSGIGVFKVLKCGLSLVYENDKNKNSSLEAKYDVPVEVSFQEPEHGIMEEERYINKRRSDDRRPKKKRKTKRDDIMIISTVTQTCVPSVNARIEDKVTG.

Residues 12 to 174 (PQHQVFINFR…EIVKEVKKVL (163 aa)) form the TIR domain. The active site involves glutamate 86. The NB-ARC domain maps to 211 to 474 (KQRLKELEEK…FLDIACFRSQ (264 aa)). The LRR 1 repeat unit spans residues 592–613 (SHCPHECLTNNKINMPDGLELP). Residues 614–635 (LKEVRCLHWLKFPLEELPNDFD) form an LRR 2; degenerate repeat. 6 LRR repeats span residues 636-659 (PINL…VKDT), 684-703 (NLQR…RDVN), 704-725 (LTSL…PLIP), 726-748 (ENLK…VGNL), 772-794 (LKTL…EINK), and 795-818 (SSLK…SVQY). An LRR 9; degenerate repeat occupies 819 to 836 (LCLSRNDHLIYLPAGINQ). The stretch at 837-863 (VSQLTRLDLKYCTKLTYVPELPPTLQY) is one LRR 10 repeat.

Belongs to the disease resistance TIR-NB-LRR family. In terms of assembly, interacts with RRS1B. RPS4B-RRS1B heterodimer interacts with the bacterial effectors AvrRps4 and PopP2.

It is found in the nucleus. It catalyses the reaction NAD(+) + H2O = ADP-D-ribose + nicotinamide + H(+). Functionally, disease resistance (R) protein that specifically recognizes the AvrRps4 type III effector avirulence protein from P.syringae. Heterodimerization with RRS1B is required to form a functional complex to recognize AvrRps4 and to mediate the hypersensitive response. This Arabidopsis thaliana (Mouse-ear cress) protein is Disease resistance protein RPS4B.